Here is a 324-residue protein sequence, read N- to C-terminus: Pseudouridine-5'-phosphate glycosidase (324 aa).

Glutamate 43 acts as the Proton donor in catalysis. Substrate is bound by residues lysine 104 and valine 124. Position 156 (aspartate 156) interacts with Mn(2+). 158–160 (SAD) contributes to the substrate binding site. The active-site Nucleophile is the lysine 177.

Belongs to the pseudouridine-5'-phosphate glycosidase family. As to quaternary structure, homotrimer. Requires Mn(2+) as cofactor.

It catalyses the reaction D-ribose 5-phosphate + uracil = psi-UMP + H2O. Its function is as follows. Catalyzes the reversible cleavage of pseudouridine 5'-phosphate (PsiMP) to ribose 5-phosphate and uracil. Functions biologically in the cleavage direction, as part of a pseudouridine degradation pathway. This chain is Pseudouridine-5'-phosphate glycosidase, found in Salinispora tropica (strain ATCC BAA-916 / DSM 44818 / JCM 13857 / NBRC 105044 / CNB-440).